The following is a 553-amino-acid chain: MAAVSLRLGDLVWGKLGRYPPWPGKIVNPPKDLKKPRGKKCFFVKFFGTEDHAWIKVEQLKPYHLHKEEMIKINKGKRFQQAVDAVEEFLRKTKGKDQASSHNSSEEKNRRNSSEERGKQSAREEKRKASLSEGKLKKGTGEGKKRVSSVSSERGSKSPLKRAQDQSPRKRGRPPKDEKDLTIPESSTVKRVMTGTVAGFKWPPSVSEPVKDSDPHFHHFLLSQTEKPAVCYQAITKKLKVCEEETGSTSIQAADSTAVNGSITPTDKKIGFLGLGLMGSGIVSNLLKMGHTVTVWNRTAEKCDLFIQEGARLGRTPAEVVSTCDITFACVSDPKAAKDLVLGPSGVLQGIRPGKCYVDMSTVDADTVTELAQVIVSRGGRFLEAPVSGNQQLSNDGMLVILAAGDRGLYEDCSSCFQAMGKTSFFLGEVGNAAKMMLIVNMVQGSFMATIAEGLTLAQVTGQSQQTLLDILNQGQLASIFLDQKCQNILQGNFKPDFYLKYIQKDLRLAIALGDSVNHPTPMAAAANEVYKRAKALDQSDNDMSAVYRAYIH.

One can recognise a PWWP domain in the interval 8–66 (LGDLVWGKLGRYPPWPGKIVNPPKDLKKPRGKKCFFVKFFGTEDHAWIKVEQLKPYHLH). 2 stretches are compositionally biased toward basic and acidic residues: residues 92–145 (KTKG…EGKK) and 162–182 (RAQD…KDLT). Positions 92–188 (KTKGKDQASS…KDLTIPESST (97 aa)) are disordered. Positions 168–180 (PRKRGRPPKDEKD) form a DNA-binding region, a.T hook. Residues 214 to 217 (DPHF) are interaction with histone H3. The interval 261 to 553 (GSITPTDKKI…MSAVYRAYIH (293 aa)) is dehydrogenase domain. NAD(+) contacts are provided by residues 271–285 (GFLG…IVSN), T362, and K505.

The protein belongs to the HIBADH-related family. NP60 subfamily. Homotetramere. Binds to mononucleosomes.

The protein resides in the nucleus. Its subcellular location is the chromosome. Cytokine-like nuclear factor with chromatin gene reader activity involved in chromatin modification and regulation of gene expression. Acts as a nucleosome-destabilizing factor that is recruited to genes during transcriptional activation. Recognizes and binds histone H3 without a preference for specific epigenetic markers and also binds DNA. Interacts with KDM1B and promotes its histone demethylase activity by facilitating the capture of H3 tails, they form a multifunctional enzyme complex that modifies transcribed chromatin and facilitates Pol II transcription through nucleosomes. This chain is Cytokine-like nuclear factor N-PAC (GLYR1), found in Gallus gallus (Chicken).